We begin with the raw amino-acid sequence, 408 residues long: Transmembrane protein 237 (408 aa).

Over residues 1–14 (MRTDSGARLEEGHL) the composition is skewed to basic and acidic residues. The tract at residues 1–137 (MRTDSGARLE…RRKTKKTQPA (137 aa)) is disordered. A phosphoserine mark is found at Ser-25 and Ser-49. A compositionally biased stretch (basic and acidic residues) spans 60–77 (RPSEGNEPSTKELKEHPE). Residues 95-106 (TSSTQKKSSSSS) are compositionally biased toward low complexity. Transmembrane regions (helical) follow at residues 227–247 (MIGLFSHGFLAGCAVWNIVVI), 268–288 (LAYPFQSLLYLLLALSTISAF), 303–323 (FLALDPTALASFLYFTALILS), and 358–378 (WIVVNLVVALLVGLSWLFLSY).

Belongs to the TMEM237 family. Part of the tectonic-like complex (also named B9 complex). Interacts with TMEM107.

It localises to the membrane. Its subcellular location is the cell projection. It is found in the cilium. Functionally, component of the transition zone in primary cilia. Required for ciliogenesis. This Homo sapiens (Human) protein is Transmembrane protein 237 (TMEM237).